The chain runs to 297 residues: Lymphocyte antigen 6 complex locus protein G6f (297 aa).

An N-terminal signal peptide occupies residues 1 to 16; that stretch reads MAVLFLLLFLCGTPQA. The Ig-like V-type domain occupies 17–122; that stretch reads ADNMQAIYVA…HNYQNWRVYD (106 aa). Over 17–235 the chain is Extracellular; the sequence is ADNMQAIYVA…APSTGWDMPW (219 aa). Residues Cys-35 and Cys-106 are joined by a disulfide bond. Asn-88 is a glycosylation site (N-linked (GlcNAc...) asparagine). Residues 236-256 traverse the membrane as a helical segment; that stretch reads ILMLLLTMGQGVVILALSIVL. Residues 257 to 297 lie on the Cytoplasmic side of the membrane; that stretch reads WRQRVRGAPGRDASIPQFKPEIQVYENIHLARLGPPAHKPR. Tyr-281 is modified (phosphotyrosine).

In terms of assembly, homodimer; disulfide-linked. Interacts with GRB2 and GRB7 in a phosphorylation-dependent manner. Post-translationally, N-glycosylated.

It is found in the cell membrane. Functionally, may play a role in the downstream signal transduction pathways involving GRB2 and GRB7. The sequence is that of Lymphocyte antigen 6 complex locus protein G6f (LY6G6F) from Homo sapiens (Human).